A 432-amino-acid polypeptide reads, in one-letter code: Cyclic GMP-AMP synthase-like receptor (432 aa).

Residues serine 59 and 71-73 (EFD) each bind ATP. Residues glutamate 71, aspartate 73, and aspartate 205 each contribute to the Mg(2+) site. GTP is bound by residues aspartate 205 and 255 to 262 (KQTCSVLE). Residues 259–262 (SVLE), lysine 284, and 303–307 (TYALK) contribute to the ATP site.

Belongs to the mab-21 family. Mg(2+) serves as cofactor. Requires Mn(2+) as cofactor.

It carries out the reaction GTP + ATP = 2',3'-cGAMP + 2 diphosphate. It catalyses the reaction GTP + ATP = pppGp(2'-5')A + diphosphate. The enzyme catalyses pppGp(2'-5')A = 2',3'-cGAMP + diphosphate. Its function is as follows. Nucleotidyltransferase that catalyzes the formation of cyclic GMP-AMP (2',3'-cGAMP) from ATP and GTP and plays a key role in innate immunity. Directly binds some unknown ligand, activating the nucleotidyltransferase activity, leading to synthesis of 2',3'-cGAMP, a second messenger that binds to and activates Sting, thereby triggering the immune response via activation of the NF-kappa-B transcription factor. The chain is Cyclic GMP-AMP synthase-like receptor from Pocillopora damicornis (Cauliflower coral).